A 150-amino-acid chain; its full sequence is Ribosome-binding factor A (150 aa).

Residues 126–150 (EVARDLSHDDDEDGGADEAPRNGDE) form a disordered region.

This sequence belongs to the RbfA family. In terms of assembly, monomer. Binds 30S ribosomal subunits, but not 50S ribosomal subunits or 70S ribosomes.

It is found in the cytoplasm. One of several proteins that assist in the late maturation steps of the functional core of the 30S ribosomal subunit. Associates with free 30S ribosomal subunits (but not with 30S subunits that are part of 70S ribosomes or polysomes). Required for efficient processing of 16S rRNA. May interact with the 5'-terminal helix region of 16S rRNA. The protein is Ribosome-binding factor A of Brucella abortus (strain S19).